Consider the following 355-residue polypeptide: F-box only protein 32 (355 aa).

A Nuclear localization signal motif is present at residues 62–67; it reads KKRKKD. The Nuclear export signal motif lies at 169–173; that stretch reads LLQTL. The 49-residue stretch at 223 to 271 folds into the F-box domain; that stretch reads LTFTDLPLCLQLNIMQRLSDGRDLVSLGQAAPDLHVLSEDRLLWKKLCQ. The Bipartite nuclear localization signal motif lies at 280–295; it reads RKRLILSDKGQLDWKK.

In terms of assembly, part of the SCF (SKP1-CUL1-F-box) E3 ubiquitin-protein ligase complex SCF(FBXO32) formed of CUL1, SKP1, RBX1 and FBXO32. Specifically expressed in cardiac and skeletal muscle.

It is found in the cytoplasm. The protein resides in the nucleus. It participates in protein modification; protein ubiquitination. Its function is as follows. Substrate recognition component of a SCF (SKP1-CUL1-F-box protein) E3 ubiquitin-protein ligase complex which mediates the ubiquitination and subsequent proteasomal degradation of target proteins. Probably recognizes and binds to phosphorylated target proteins during skeletal muscle atrophy. Recognizes TERF1. This Homo sapiens (Human) protein is F-box only protein 32 (FBXO32).